A 218-amino-acid polypeptide reads, in one-letter code: MAPHQFKSKGAPTLVHVREAARFDRDGLIPAVVQDVLDGTVLMVAWMNREALERTLETGESWFWSRSRQELWHKGATSGHRQKIKALRYDCDSDVLLLTVEQQGDIACHLGERSCFHRDEAGDYDLPPADTLSQVFRVVEERKAHPHPDSYTSRLLEAGSNKILKKIGEEATEVVMAAKDGERVAEEVADLWYHTLVLLAHADVDILDVYRALQQRRR.

The tract at residues 1–131 is phosphoribosyl-AMP cyclohydrolase; that stretch reads MAPHQFKSKG…GDYDLPPADT (131 aa). A phosphoribosyl-ATP pyrophosphohydrolase region spans residues 132–218; sequence LSQVFRVVEE…VYRALQQRRR (87 aa).

It in the N-terminal section; belongs to the PRA-CH family. In the C-terminal section; belongs to the PRA-PH family.

The protein localises to the cytoplasm. It catalyses the reaction 1-(5-phospho-beta-D-ribosyl)-ATP + H2O = 1-(5-phospho-beta-D-ribosyl)-5'-AMP + diphosphate + H(+). It carries out the reaction 1-(5-phospho-beta-D-ribosyl)-5'-AMP + H2O = 1-(5-phospho-beta-D-ribosyl)-5-[(5-phospho-beta-D-ribosylamino)methylideneamino]imidazole-4-carboxamide. The protein operates within amino-acid biosynthesis; L-histidine biosynthesis; L-histidine from 5-phospho-alpha-D-ribose 1-diphosphate: step 2/9. It participates in amino-acid biosynthesis; L-histidine biosynthesis; L-histidine from 5-phospho-alpha-D-ribose 1-diphosphate: step 3/9. The chain is Histidine biosynthesis bifunctional protein HisIE from Gloeobacter violaceus (strain ATCC 29082 / PCC 7421).